Reading from the N-terminus, the 275-residue chain is NAD kinase (275 aa).

The Proton acceptor role is filled by Asp66. Residues 66–67 (DG), 138–139 (NE), His168, Asp170, 181–186 (TAYNLS), and Val205 each bind NAD(+).

The protein belongs to the NAD kinase family. It depends on a divalent metal cation as a cofactor.

It is found in the cytoplasm. The catalysed reaction is NAD(+) + ATP = ADP + NADP(+) + H(+). Involved in the regulation of the intracellular balance of NAD and NADP, and is a key enzyme in the biosynthesis of NADP. Catalyzes specifically the phosphorylation on 2'-hydroxyl of the adenosine moiety of NAD to yield NADP. The polypeptide is NAD kinase (Halorubrum lacusprofundi (strain ATCC 49239 / DSM 5036 / JCM 8891 / ACAM 34)).